The primary structure comprises 862 residues: DNA mismatch repair protein MutS (862 aa).

604–611 lines the ATP pocket; sequence GPNMAGKS.

Belongs to the DNA mismatch repair MutS family.

This protein is involved in the repair of mismatches in DNA. It is possible that it carries out the mismatch recognition step. This protein has a weak ATPase activity. The protein is DNA mismatch repair protein MutS of Brevibacillus brevis (strain 47 / JCM 6285 / NBRC 100599).